A 324-amino-acid chain; its full sequence is Acetyl-coenzyme A carboxylase carboxyl transferase subunit alpha (324 aa).

The CoA carboxyltransferase C-terminal domain occupies 37–291 (KLERRLDKLK…QNFILQEWLR (255 aa)).

The protein belongs to the AccA family. Acetyl-CoA carboxylase is a heterohexamer composed of biotin carboxyl carrier protein (AccB), biotin carboxylase (AccC) and two subunits each of ACCase subunit alpha (AccA) and ACCase subunit beta (AccD).

It is found in the cytoplasm. It carries out the reaction N(6)-carboxybiotinyl-L-lysyl-[protein] + acetyl-CoA = N(6)-biotinyl-L-lysyl-[protein] + malonyl-CoA. It participates in lipid metabolism; malonyl-CoA biosynthesis; malonyl-CoA from acetyl-CoA: step 1/1. Component of the acetyl coenzyme A carboxylase (ACC) complex. First, biotin carboxylase catalyzes the carboxylation of biotin on its carrier protein (BCCP) and then the CO(2) group is transferred by the carboxyltransferase to acetyl-CoA to form malonyl-CoA. The sequence is that of Acetyl-coenzyme A carboxylase carboxyl transferase subunit alpha from Chlamydia caviae (strain ATCC VR-813 / DSM 19441 / 03DC25 / GPIC) (Chlamydophila caviae).